A 182-amino-acid polypeptide reads, in one-letter code: Ribulose bisphosphate carboxylase small subunit, chloroplastic 5 (182 aa).

Residues 1-49 constitute a chloroplast transit peptide; it reads MASSLMSNAATTMAAATTTAQANMVAPFNGLKSISAFPVTRKNNDITSV.

Belongs to the RuBisCO small chain family. In terms of assembly, heterohexadecamer of 8 large and 8 small subunits.

It is found in the plastid. It localises to the chloroplast. Functionally, ruBisCO catalyzes two reactions: the carboxylation of D-ribulose 1,5-bisphosphate, the primary event in carbon dioxide fixation, as well as the oxidative fragmentation of the pentose substrate. Both reactions occur simultaneously and in competition at the same active site. Although the small subunit is not catalytic it is essential for maximal activity. The polypeptide is Ribulose bisphosphate carboxylase small subunit, chloroplastic 5 (Mesembryanthemum crystallinum (Common ice plant)).